Reading from the N-terminus, the 202-residue chain is Imidazoleglycerol-phosphate dehydratase (202 aa).

This sequence belongs to the imidazoleglycerol-phosphate dehydratase family.

It localises to the cytoplasm. The enzyme catalyses D-erythro-1-(imidazol-4-yl)glycerol 3-phosphate = 3-(imidazol-4-yl)-2-oxopropyl phosphate + H2O. Its pathway is amino-acid biosynthesis; L-histidine biosynthesis; L-histidine from 5-phospho-alpha-D-ribose 1-diphosphate: step 6/9. In Synechococcus sp. (strain WH7803), this protein is Imidazoleglycerol-phosphate dehydratase.